Consider the following 227-residue polypeptide: Monoamine regulon transcriptional regulator (227 aa).

The region spanning 155 to 220 (EDDLPAILTA…ELVSRTWMPA (66 aa)) is the HTH luxR-type domain. Positions 179–198 (NKLIARQLDISLSTVKTHLR) form a DNA-binding region, H-T-H motif.

In terms of biological role, positive regulatory protein for the induction of arylsulfatase synthesis (maoA), tyramine oxidase (tynA), maoC, maoE/F operon, and atsB/A operon which are all regulated by monoamines, and included under the common term of monoamine regulon. The sequence is that of Monoamine regulon transcriptional regulator (moaR) from Klebsiella aerogenes (Enterobacter aerogenes).